Here is a 344-residue protein sequence, read N- to C-terminus: Methionine import ATP-binding protein MetN 1 (344 aa).

Positions I2 to I241 constitute an ABC transporter domain. G38–S45 contributes to the ATP binding site.

It belongs to the ABC transporter superfamily. Methionine importer (TC 3.A.1.24) family. As to quaternary structure, the complex is composed of two ATP-binding proteins (MetN), two transmembrane proteins (MetI) and a solute-binding protein (MetQ).

Its subcellular location is the cell inner membrane. The enzyme catalyses L-methionine(out) + ATP + H2O = L-methionine(in) + ADP + phosphate + H(+). It carries out the reaction D-methionine(out) + ATP + H2O = D-methionine(in) + ADP + phosphate + H(+). Part of the ABC transporter complex MetNIQ involved in methionine import. Responsible for energy coupling to the transport system. In Burkholderia lata (strain ATCC 17760 / DSM 23089 / LMG 22485 / NCIMB 9086 / R18194 / 383), this protein is Methionine import ATP-binding protein MetN 1.